The following is a 250-amino-acid chain: NADH-quinone oxidoreductase subunit C (250 aa).

It belongs to the complex I 30 kDa subunit family. NDH-1 is composed of 14 different subunits. Subunits NuoB, C, D, E, F, and G constitute the peripheral sector of the complex.

It localises to the cell inner membrane. It catalyses the reaction a quinone + NADH + 5 H(+)(in) = a quinol + NAD(+) + 4 H(+)(out). Functionally, NDH-1 shuttles electrons from NADH, via FMN and iron-sulfur (Fe-S) centers, to quinones in the respiratory chain. The immediate electron acceptor for the enzyme in this species is believed to be ubiquinone. Couples the redox reaction to proton translocation (for every two electrons transferred, four hydrogen ions are translocated across the cytoplasmic membrane), and thus conserves the redox energy in a proton gradient. In Xanthomonas euvesicatoria pv. vesicatoria (strain 85-10) (Xanthomonas campestris pv. vesicatoria), this protein is NADH-quinone oxidoreductase subunit C.